We begin with the raw amino-acid sequence, 360 residues long: Phospho-N-acetylmuramoyl-pentapeptide-transferase (360 aa).

Helical transmembrane passes span 27-47, 73-93, 98-118, 134-154, 168-188, 199-219, 239-259, 263-283, 288-308, and 337-357; these read GAVM…IEWL, TMGG…WADL, VWAV…DDYL, LVAQ…LGQG, LTFN…VGAS, GLAI…AYLV, LAVF…FNAP, VFMG…VSVV, IVLA…IVQV, and TVVI…LSTL.

It belongs to the glycosyltransferase 4 family. MraY subfamily. Mg(2+) is required as a cofactor.

The protein resides in the cell inner membrane. The catalysed reaction is UDP-N-acetyl-alpha-D-muramoyl-L-alanyl-gamma-D-glutamyl-meso-2,6-diaminopimeloyl-D-alanyl-D-alanine + di-trans,octa-cis-undecaprenyl phosphate = di-trans,octa-cis-undecaprenyl diphospho-N-acetyl-alpha-D-muramoyl-L-alanyl-D-glutamyl-meso-2,6-diaminopimeloyl-D-alanyl-D-alanine + UMP. It functions in the pathway cell wall biogenesis; peptidoglycan biosynthesis. In terms of biological role, catalyzes the initial step of the lipid cycle reactions in the biosynthesis of the cell wall peptidoglycan: transfers peptidoglycan precursor phospho-MurNAc-pentapeptide from UDP-MurNAc-pentapeptide onto the lipid carrier undecaprenyl phosphate, yielding undecaprenyl-pyrophosphoryl-MurNAc-pentapeptide, known as lipid I. The protein is Phospho-N-acetylmuramoyl-pentapeptide-transferase of Rhodospirillum rubrum (strain ATCC 11170 / ATH 1.1.1 / DSM 467 / LMG 4362 / NCIMB 8255 / S1).